We begin with the raw amino-acid sequence, 994 residues long: Tyrosine-protein kinase Mer (994 aa).

The first 18 residues, 1–18 (MVLAPLLLGLLLLPALWS), serve as a signal peptide directing secretion. Topologically, residues 19–497 (GGTAEKWEET…TPAPGNTDSM (479 aa)) are extracellular. Residues 44–78 (VNHRPFSAPHSSRDQLPPPQTGRSHPAHTAAPQVT) are disordered. Ig-like C2-type domains lie at 75-181 (PQVT…EIVS) and 192-268 (PYFI…LTVS). 15 N-linked (GlcNAc...) asparagine glycosylation sites follow: N91, N108, N165, N202, N210, N229, N289, N311, N324, N331, N349, N384, N390, N437, and N449. C109 and C170 are joined by a disulfide. A disulfide bond links C213 and C257. Fibronectin type-III domains lie at 281-376 (PPTE…TTEG) and 381-478 (APLN…IPEH). A helical transmembrane segment spans residues 498–518 (FIILGCFCGFILIGLILCISL). The Cytoplasmic segment spans residues 519-994 (ALRRRVQETK…DSLEDSEVLM (476 aa)). S538 is modified (phosphoserine). The Protein kinase domain maps to 582-852 (LVLGKVLGEG…SVLRLQLEKL (271 aa)). ATP-binding positions include 588–596 (LGEGEFGSV) and K610. D718 acts as the Proton acceptor in catalysis. A phosphotyrosine; by autocatalysis mark is found at Y744, Y748, Y749, and Y867.

Belongs to the protein kinase superfamily. Tyr protein kinase family. AXL/UFO subfamily. In terms of assembly, interacts (upon activation) with TNK2; stimulates TNK2 autophosphorylation. Interacts (via N-terminus) with extracellular ligands LGALS3, TUB, TULP1 and GAS6. Interacts with VAV1 in a phosphotyrosine-independent manner. Interacts with TIMD4; this interaction enhances TIMD4-mediated efferocytosis. In terms of processing, autophosphorylated on Tyr-744, Tyr-748 and Tyr-749 in the activation loop allowing full activity. Autophosphorylated on Tyr-867 leading to recruitment of downstream partners of the signaling cascade such as PLCG2. In terms of tissue distribution, expressed predominantly in the hematopoietic lineages: macrophages, NK cells, NKT cells, dendritic cells and platelets.

The protein localises to the cell membrane. The enzyme catalyses L-tyrosyl-[protein] + ATP = O-phospho-L-tyrosyl-[protein] + ADP + H(+). Receptor tyrosine kinase that transduces signals from the extracellular matrix into the cytoplasm by binding to several ligands including LGALS3, TUB, TULP1 or GAS6. Regulates many physiological processes including cell survival, migration, differentiation, and phagocytosis of apoptotic cells (efferocytosis). Ligand binding at the cell surface induces autophosphorylation of MERTK on its intracellular domain that provides docking sites for downstream signaling molecules. Following activation by ligand, interacts with GRB2 or PLCG2 and induces phosphorylation of MAPK1, MAPK2, FAK/PTK2 or RAC1. MERTK signaling plays a role in various processes such as macrophage clearance of apoptotic cells, platelet aggregation, cytoskeleton reorganization and engulfment. Functions in the retinal pigment epithelium (RPE) as a regulator of rod outer segments fragments phagocytosis. Also plays an important role in inhibition of Toll-like receptors (TLRs)-mediated innate immune response by activating STAT1, which selectively induces production of suppressors of cytokine signaling SOCS1 and SOCS3. The protein is Tyrosine-protein kinase Mer (Mertk) of Mus musculus (Mouse).